The sequence spans 325 residues: MSQPPEHPGNPADPQGGNQGAGSYPPPGYGAPPPPPGYGPPPGTYLPPGYNAPPPPPGYGPPPGPPPPGYPTHLQSSGFSVGDAISWSWNRFTQNAVTLVVPVLAYAVALAAVIGATAGLVVALSDRATTAYTNTSGVSSESVDITMTPAAGIVMFLGYIALFALVLYMHAGILTGCLDIADGKPVTIATFFRPRNLGLVLVTGLLIVALTFIGGLLCVIPGLIFGFVAQFAVAFAVDRSTSPIDSVKASIETVGSNIGGSVLSWLAQLTAVLVGELLCFVGMLIGIPVAALIHVYTYRKLSGGQVVEAVRPAPPVGWPPGPQLA.

The segment at 1–75 is disordered; the sequence is MSQPPEHPGN…PPPGYPTHLQ (75 aa). Pro residues predominate over residues 24-70; that stretch reads YPPPGYGAPPPPPGYGPPPGTYLPPGYNAPPPPPGYGPPPGPPPPGY. The next 4 membrane-spanning stretches (helical) occupy residues 96-116, 153-173, 205-225, and 273-293; these read AVTL…VIGA, IVMF…HAGI, LLIV…GLIF, and LVGE…AALI.

It to M.tuberculosis Rv2560.

It is found in the cell membrane. This is an uncharacterized protein from Mycobacterium bovis (strain ATCC BAA-935 / AF2122/97).